A 277-amino-acid chain; its full sequence is MNKSAQQKSAHVTTRRLLDMKHNGEKISMLTAYDYTMARILDRAGLDVLLVGDSASNVFAGHSTTLPITIEEMVYHAKAVVRGVHDESGRAMVVVDMPFMSYQISGDEALRNAGKIMKEHGCDALKLEGGKIIADTVKRITDVGIPVMGHLGLMPQSIYKYGSYKVRAKEGVEAEQLLEDAKIIEEAGAFAIVLEKIPSVLAAEVTRSLTIPTIGIGAGVACDGQVLVINDILGLNREFHPRFVRQYADLNTVIEHAAKQYVEDVRQSNFPSPDESY.

Mg(2+)-binding residues include Asp53 and Asp96. Residues 53-54 (DS), Asp96, and Lys126 contribute to the 3-methyl-2-oxobutanoate site. Glu128 is a Mg(2+) binding site. The Proton acceptor role is filled by Glu195.

This sequence belongs to the PanB family. Homodecamer; pentamer of dimers. It depends on Mg(2+) as a cofactor.

The protein resides in the cytoplasm. The catalysed reaction is 3-methyl-2-oxobutanoate + (6R)-5,10-methylene-5,6,7,8-tetrahydrofolate + H2O = 2-dehydropantoate + (6S)-5,6,7,8-tetrahydrofolate. It participates in cofactor biosynthesis; (R)-pantothenate biosynthesis; (R)-pantoate from 3-methyl-2-oxobutanoate: step 1/2. In terms of biological role, catalyzes the reversible reaction in which hydroxymethyl group from 5,10-methylenetetrahydrofolate is transferred onto alpha-ketoisovalerate to form ketopantoate. The chain is 3-methyl-2-oxobutanoate hydroxymethyltransferase from Pelodictyon phaeoclathratiforme (strain DSM 5477 / BU-1).